We begin with the raw amino-acid sequence, 259 residues long: Phosphatidylglycerol--prolipoprotein diacylglyceryl transferase (259 aa).

The next 4 helical transmembrane spans lie at 9-29, 55-75, 92-112, and 117-137; these read IIFS…VVGI, FITY…VLLY, EGGM…YLFC, and INFL…LFLG. Arg138 provides a ligand contact to a 1,2-diacyl-sn-glycero-3-phospho-(1'-sn-glycerol). 3 helical membrane passes run 172–192, 201–221, and 228–248; these read QLYE…YAVF, GLNS…IEMF, and IGFI…MLLL.

This sequence belongs to the Lgt family.

The protein localises to the cell inner membrane. The enzyme catalyses L-cysteinyl-[prolipoprotein] + a 1,2-diacyl-sn-glycero-3-phospho-(1'-sn-glycerol) = an S-1,2-diacyl-sn-glyceryl-L-cysteinyl-[prolipoprotein] + sn-glycerol 1-phosphate + H(+). The protein operates within protein modification; lipoprotein biosynthesis (diacylglyceryl transfer). In terms of biological role, catalyzes the transfer of the diacylglyceryl group from phosphatidylglycerol to the sulfhydryl group of the N-terminal cysteine of a prolipoprotein, the first step in the formation of mature lipoproteins. The chain is Phosphatidylglycerol--prolipoprotein diacylglyceryl transferase from Rickettsia typhi (strain ATCC VR-144 / Wilmington).